Consider the following 261-residue polypeptide: Glucose 1-dehydrogenase (261 aa).

11 to 35 (AITGAASGLGKAMAIRFGKEQAKVV) provides a ligand contact to NADP(+). Residue serine 145 participates in substrate binding. Catalysis depends on tyrosine 158, which acts as the Proton acceptor.

The protein belongs to the short-chain dehydrogenases/reductases (SDR) family. Homotetramer.

The enzyme catalyses D-glucose + NAD(+) = D-glucono-1,5-lactone + NADH + H(+). The catalysed reaction is D-glucose + NADP(+) = D-glucono-1,5-lactone + NADPH + H(+). The chain is Glucose 1-dehydrogenase (gdh) from Bacillus subtilis (strain 168).